The chain runs to 222 residues: Probable mitochondrial import inner membrane translocase subunit Tim17 3 (222 aa).

The next 3 helical transmembrane spans lie at 16 to 36, 60 to 80, and 115 to 135; these read CGCA…LKGF, SIAG…CALV, and ALVG…VATI.

It belongs to the Tim17/Tim22/Tim23 family. In terms of assembly, component of the TIM23 complex at least composed of Tim23, Tim17 (Tim17a1, Tim17a2 or Tim17b1) and a Tim50. The complex interacts with the Tim44 component of the PAM complex.

It is found in the mitochondrion inner membrane. Functionally, essential component of the TIM23 complex, a complex that mediates the translocation of transit peptide-containing proteins across the mitochondrial inner membrane. This chain is Probable mitochondrial import inner membrane translocase subunit Tim17 3 (Tim17a1), found in Drosophila melanogaster (Fruit fly).